A 411-amino-acid polypeptide reads, in one-letter code: S-inosyl-L-homocysteine hydrolase (411 aa).

2 residues coordinate substrate: aspartate 121 and glutamate 146. NAD(+) is bound at residue 147–149 (TTT). Substrate is bound by residues lysine 176 and aspartate 180. NAD(+)-binding positions include asparagine 181, 210–215 (GYGWCG), glutamate 233, asparagine 268, 289–291 (SGH), and asparagine 335.

Belongs to the adenosylhomocysteinase family. NAD(+) is required as a cofactor.

Its subcellular location is the cytoplasm. The catalysed reaction is S-inosyl-L-homocysteine + H2O = L-homocysteine + inosine. It participates in amino-acid biosynthesis; S-adenosyl-L-methionine biosynthesis. Functionally, catalyzes the hydrolysis of S-inosyl-L-homocysteine (SIH) to L-homocysteine (Hcy) and inosine. Likely functions in a S-adenosyl-L-methionine (SAM) recycling pathway from S-adenosyl-L-homocysteine (SAH) produced from SAM-dependent methylation reactions. Can also catalyze the reverse reaction in vitro, i.e. the synthesis of SIH from Hcy and inosine. The protein is S-inosyl-L-homocysteine hydrolase of Methanosarcina acetivorans (strain ATCC 35395 / DSM 2834 / JCM 12185 / C2A).